A 409-amino-acid polypeptide reads, in one-letter code: Pyruvate dehydrogenase E1 component subunit alpha, mitochondrial (409 aa).

Position 6 is a phosphothreonine (T6). H109, Y135, R136, A174, G182, V184, D213, G214, A215, N242, and Y244 together coordinate pyruvate. Thiamine diphosphate contacts are provided by Y135 and R136. 6 residues coordinate thiamine diphosphate: G182, V184, D213, G214, A215, and N242. A Mg(2+)-binding site is contributed by D213. Mg(2+) is bound by residues N242 and Y244. Y306 is subject to Phosphotyrosine. H309 serves as a coordination point for thiamine diphosphate. S310 and S312 each carry phosphoserine.

In terms of assembly, tetramer of 2 alpha and 2 beta subunits. The cofactor is thiamine diphosphate. Mg(2+) serves as cofactor.

Its subcellular location is the mitochondrion matrix. The enzyme catalyses N(6)-[(R)-lipoyl]-L-lysyl-[protein] + pyruvate + H(+) = N(6)-[(R)-S(8)-acetyldihydrolipoyl]-L-lysyl-[protein] + CO2. With respect to regulation, E1 activity is regulated by phosphorylation (inactivation) and dephosphorylation (activation) of the alpha subunit. Its function is as follows. The pyruvate dehydrogenase complex catalyzes the overall conversion of pyruvate to acetyl-CoA and CO(2). It contains multiple copies of three enzymatic components: pyruvate dehydrogenase (E1), dihydrolipoamide acetyltransferase (E2) and lipoamide dehydrogenase (E3). This chain is Pyruvate dehydrogenase E1 component subunit alpha, mitochondrial (pda1), found in Schizosaccharomyces pombe (strain 972 / ATCC 24843) (Fission yeast).